Consider the following 265-residue polypeptide: Glutamate racemase (265 aa).

Substrate contacts are provided by residues 12–13 (DS) and 44–45 (YG). C75 (proton donor/acceptor) is an active-site residue. 76-77 (NT) contacts substrate. C186 acts as the Proton donor/acceptor in catalysis. Residue 187–188 (TH) coordinates substrate.

Belongs to the aspartate/glutamate racemases family.

The catalysed reaction is L-glutamate = D-glutamate. It functions in the pathway cell wall biogenesis; peptidoglycan biosynthesis. In terms of biological role, provides the (R)-glutamate required for cell wall biosynthesis. The polypeptide is Glutamate racemase (Pseudomonas aeruginosa (strain ATCC 15692 / DSM 22644 / CIP 104116 / JCM 14847 / LMG 12228 / 1C / PRS 101 / PAO1)).